Consider the following 215-residue polypeptide: Ras-related protein Rab-5B (215 aa).

Positions 29, 30, 32, 33, 34, 35, 46, 47, 52, 78, 133, 134, 136, 164, and 165 each coordinate GTP. Serine 34 provides a ligand contact to Mg(2+). Short sequence motifs (switch) lie at residues 44-56 (QFHE…IGAA) and 77-93 (AGQE…YRGA). Threonine 52 is a Mg(2+) binding site. The tract at residues 184–215 (SEPQSTSGAAGRSRGVDLHEQTQQNKSQCCSN) is disordered. Over residues 204–215 (QTQQNKSQCCSN) the composition is skewed to polar residues. S-geranylgeranyl cysteine attachment occurs at residues cysteine 212 and cysteine 213.

It belongs to the small GTPase superfamily. Rab family. Mg(2+) serves as cofactor.

It is found in the cell membrane. The protein resides in the early endosome membrane. The catalysed reaction is GTP + H2O = GDP + phosphate + H(+). With respect to regulation, regulated by guanine nucleotide exchange factors (GEFs) which promote the exchange of bound GDP for free GTP. Regulated by GTPase activating proteins (GAPs) which increase the GTP hydrolysis activity. Inhibited by GDP dissociation inhibitors (GDIs). Its function is as follows. The small GTPases Rab are key regulators of intracellular membrane trafficking, from the formation of transport vesicles to their fusion with membranes. Rabs cycle between an inactive GDP-bound form and an active GTP-bound form that is able to recruit to membranes different sets of downstream effectors directly responsible for vesicle formation, movement, tethering and fusion. The protein is Ras-related protein Rab-5B (RAB5B) of Gallus gallus (Chicken).